The chain runs to 341 residues: Putative [LysW]-lysine/[LysW]-ornithine hydrolase (341 aa).

Histidine 62 provides a ligand contact to Zn(2+). Aspartate 64 is a catalytic residue. Aspartate 86 contacts Zn(2+). Glutamate 115 functions as the Proton acceptor in the catalytic mechanism. The Zn(2+) site is built by glutamate 116, glutamate 140, and histidine 309.

The protein belongs to the peptidase M20A family. LysK subfamily. Zn(2+) serves as cofactor. Co(2+) is required as a cofactor.

Its subcellular location is the cytoplasm. It catalyses the reaction [amino-group carrier protein]-C-terminal-gamma-(L-lysyl)-L-glutamate + H2O = [amino-group carrier protein]-C-terminal-L-glutamate + L-lysine. It carries out the reaction [amino-group carrier protein]-C-terminal-gamma-(L-ornithyl)-L-glutamate + H2O = [amino-group carrier protein]-C-terminal-L-glutamate + L-ornithine. It participates in amino-acid biosynthesis; L-lysine biosynthesis via AAA pathway; L-lysine from L-alpha-aminoadipate (Thermus route): step 5/5. It functions in the pathway amino-acid biosynthesis; L-arginine biosynthesis. Its function is as follows. Catalyzes the release of L-lysine from [LysW]-gamma-L-lysine and the release of L-ornithine from [LysW]-L-ornithine. The sequence is that of Putative [LysW]-lysine/[LysW]-ornithine hydrolase from Pyrobaculum aerophilum (strain ATCC 51768 / DSM 7523 / JCM 9630 / CIP 104966 / NBRC 100827 / IM2).